Reading from the N-terminus, the 159-residue chain is Large ribosomal subunit protein uL23m (159 aa).

The protein belongs to the universal ribosomal protein uL23 family. Component of the mitochondrial ribosome large subunit (39S) which comprises a 16S rRNA and about 50 distinct proteins.

The protein resides in the mitochondrion. The sequence is that of Large ribosomal subunit protein uL23m (mrpl-23) from Caenorhabditis elegans.